The sequence spans 94 residues: Co-chaperonin GroES (94 aa).

It belongs to the GroES chaperonin family. In terms of assembly, heptamer of 7 subunits arranged in a ring. Interacts with the chaperonin GroEL.

Its subcellular location is the cytoplasm. Together with the chaperonin GroEL, plays an essential role in assisting protein folding. The GroEL-GroES system forms a nano-cage that allows encapsulation of the non-native substrate proteins and provides a physical environment optimized to promote and accelerate protein folding. GroES binds to the apical surface of the GroEL ring, thereby capping the opening of the GroEL channel. This Streptococcus pneumoniae (strain Hungary19A-6) protein is Co-chaperonin GroES.